The primary structure comprises 186 residues: Ribosome-recycling factor (186 aa).

The protein belongs to the RRF family.

It localises to the cytoplasm. Functionally, responsible for the release of ribosomes from messenger RNA at the termination of protein biosynthesis. May increase the efficiency of translation by recycling ribosomes from one round of translation to another. The polypeptide is Ribosome-recycling factor (Allorhizobium ampelinum (strain ATCC BAA-846 / DSM 112012 / S4) (Agrobacterium vitis (strain S4))).